The chain runs to 136 residues: Nucleoside diphosphate kinase (136 aa).

Lys10, Phe58, Arg86, Thr92, Arg104, and Asn114 together coordinate ATP. The Pros-phosphohistidine intermediate role is filled by His117.

The protein belongs to the NDK family. As to quaternary structure, homotetramer. It depends on Mg(2+) as a cofactor.

It is found in the cytoplasm. The catalysed reaction is a 2'-deoxyribonucleoside 5'-diphosphate + ATP = a 2'-deoxyribonucleoside 5'-triphosphate + ADP. The enzyme catalyses a ribonucleoside 5'-diphosphate + ATP = a ribonucleoside 5'-triphosphate + ADP. Major role in the synthesis of nucleoside triphosphates other than ATP. The ATP gamma phosphate is transferred to the NDP beta phosphate via a ping-pong mechanism, using a phosphorylated active-site intermediate. This Corynebacterium glutamicum (strain R) protein is Nucleoside diphosphate kinase.